Here is a 296-residue protein sequence, read N- to C-terminus: GTPase Era (296 aa).

Residues 3–170 (KSGFITIVGR…LELMVKYLPE (168 aa)) enclose the Era-type G domain. Residues 11 to 18 (GRPNVGKS) are G1. 11-18 (GRPNVGKS) contacts GTP. Residues 37–41 (QTTRN) form a G2 region. Residues 58-61 (DTPG) form a G3 region. GTP is bound by residues 58 to 62 (DTPGI) and 120 to 123 (NKVD). Positions 120-123 (NKVD) are G4. A G5 region spans residues 149 to 151 (ISA). Residues 201-278 (LSQEVPHGIA…NIKIWVKVRK (78 aa)) enclose the KH type-2 domain.

The protein belongs to the TRAFAC class TrmE-Era-EngA-EngB-Septin-like GTPase superfamily. Era GTPase family. Monomer.

Its subcellular location is the cytoplasm. It is found in the cell membrane. Functionally, an essential GTPase that binds both GDP and GTP, with rapid nucleotide exchange. Plays a role in 16S rRNA processing and 30S ribosomal subunit biogenesis and possibly also in cell cycle regulation and energy metabolism. This chain is GTPase Era, found in Clostridium perfringens (strain 13 / Type A).